Here is a 185-residue protein sequence, read N- to C-terminus: Ribosome-recycling factor (185 aa).

Belongs to the RRF family.

It is found in the cytoplasm. Functionally, responsible for the release of ribosomes from messenger RNA at the termination of protein biosynthesis. May increase the efficiency of translation by recycling ribosomes from one round of translation to another. This Streptococcus thermophilus (strain CNRZ 1066) protein is Ribosome-recycling factor.